The sequence spans 266 residues: Glycine--tRNA ligase beta subunit (266 aa).

Belongs to the class-II aminoacyl-tRNA synthetase family. Tetramer of two alpha and two beta subunits.

It localises to the cytoplasm. It catalyses the reaction tRNA(Gly) + glycine + ATP = glycyl-tRNA(Gly) + AMP + diphosphate. The polypeptide is Glycine--tRNA ligase beta subunit (glyS) (Moraxella catarrhalis (Branhamella catarrhalis)).